The sequence spans 876 residues: Paramyosin (876 aa).

The tract at residues 1–28 (MSARSAKFMYRSGNAGASGDLSVEYGTD) is nonhelical region. The stretch at 29–855 (LGALTRLEDK…IRAKHRSWVT (827 aa)) forms a coiled coil. Residues 856-876 (TSQVPGGTRQVFVTQEEQSNY) are nonhelical region.

It belongs to the paramyosin family. As to quaternary structure, homodimer.

The protein localises to the cytoplasm. Its subcellular location is the myofibril. Its function is as follows. Paramyosin is a major structural component of many thick filaments isolated from invertebrate muscles. The polypeptide is Paramyosin (Sarcoptes scabiei (Itch mite)).